A 274-amino-acid polypeptide reads, in one-letter code: MPDPTGVAGRLPAVFMTPGTSSFTDFLSVAAPDLLPGARGPLPAPVTDAAHGTTIVAVAFPGGVIMAGDRRATQGHMIAQRDVEKVHHADEFSCVGYAGTAGVGAELIRLFQVELEHYEKIEGSTLSLDAKANRLAFMVKGNLGMAMQGLAVIPLFAGFDTETGEGRIFSYDIAAAKSEERTYESIGSGSVFARGSLKKRYRANHSQDDAIRISVEALYDAADDDSATGGPDLIRKLYPIVASVTVDGYRRLTDDEVGPVVDSIIADRAQNSGG.

A propeptide spans 1 to 52 (MPDPTGVAGRLPAVFMTPGTSSFTDFLSVAAPDLLPGARGPLPAPVTDAAHG) (removed in mature form; by autocatalysis). Catalysis depends on Thr53, which acts as the Nucleophile.

It belongs to the peptidase T1B family. In terms of assembly, the 20S proteasome core is composed of 14 alpha and 14 beta subunits that assemble into four stacked heptameric rings, resulting in a barrel-shaped structure. The two inner rings, each composed of seven catalytic beta subunits, are sandwiched by two outer rings, each composed of seven alpha subunits. The catalytic chamber with the active sites is on the inside of the barrel. Has a gated structure, the ends of the cylinder being occluded by the N-termini of the alpha-subunits. Is capped by the proteasome-associated ATPase, ARC.

The protein localises to the cytoplasm. It carries out the reaction Cleavage of peptide bonds with very broad specificity.. It functions in the pathway protein degradation; proteasomal Pup-dependent pathway. Its activity is regulated as follows. The formation of the proteasomal ATPase ARC-20S proteasome complex, likely via the docking of the C-termini of ARC into the intersubunit pockets in the alpha-rings, may trigger opening of the gate for substrate entry. Interconversion between the open-gate and close-gate conformations leads to a dynamic regulation of the 20S proteasome proteolysis activity. In terms of biological role, component of the proteasome core, a large protease complex with broad specificity involved in protein degradation. This is Proteasome subunit beta from Parafrankia sp. (strain EAN1pec).